Reading from the N-terminus, the 635-residue chain is Glycosyltransferase-like protein gnt13 (635 aa).

Topologically, residues 1 to 18 are cytoplasmic; the sequence is MNINTLIINFNKVKRMKN. Residues 19-38 traverse the membrane as a helical; Signal-anchor for type II membrane protein segment; the sequence is FLILTLLVVMVVVFLQGPTL. Residues 39–635 are Extracellular-facing; sequence MINNSGQGMG…PNECFSDHHW (597 aa). N-linked (GlcNAc...) asparagine glycosylation is found at Asn41 and Asn179. Disordered regions lie at residues 300 to 358 and 389 to 458; these read NINN…NNID and NIDN…NNEP. Residues 389–456 show a composition bias toward low complexity; the sequence is NIDNNNSNYN…NNNNNNNNNN (68 aa). 2 N-linked (GlcNAc...) asparagine glycosylation sites follow: Asn393 and Asn535.

This sequence belongs to the glycosyltransferase 8 family. Highly divergent.

It is found in the membrane. This chain is Glycosyltransferase-like protein gnt13 (gnt13), found in Dictyostelium discoideum (Social amoeba).